A 271-amino-acid polypeptide reads, in one-letter code: Dirigent protein 17 (271 aa).

The span at 1-12 shows a compositional bias: polar residues; that stretch reads MEDTGSIKQEAQ. Positions 1-22 are disordered; the sequence is MEDTGSIKQEAQSHPPGIFEIP. The N-linked (GlcNAc...) asparagine glycan is linked to Asn-255.

Belongs to the plant dirigent protein family. As to quaternary structure, homodimer.

The protein localises to the secreted. It is found in the extracellular space. The protein resides in the apoplast. Dirigent proteins impart stereoselectivity on the phenoxy radical-coupling reaction, yielding optically active lignans from two molecules of coniferyl alcohol in the biosynthesis of lignans, flavonolignans, and alkaloids and thus plays a central role in plant secondary metabolism. The sequence is that of Dirigent protein 17 (DIR17) from Arabidopsis thaliana (Mouse-ear cress).